Consider the following 416-residue polypeptide: Dihydroorotase (416 aa).

The Zn(2+) site is built by histidine 53 and histidine 55. Substrate contacts are provided by residues 55–57 and asparagine 87; that span reads HLR. Residues aspartate 145, histidine 172, histidine 225, and aspartate 298 each coordinate Zn(2+). Residue aspartate 298 is part of the active site. Histidine 302 is a substrate binding site.

Belongs to the metallo-dependent hydrolases superfamily. DHOase family. Class I DHOase subfamily. Requires Zn(2+) as cofactor.

The enzyme catalyses (S)-dihydroorotate + H2O = N-carbamoyl-L-aspartate + H(+). Its pathway is pyrimidine metabolism; UMP biosynthesis via de novo pathway; (S)-dihydroorotate from bicarbonate: step 3/3. Functionally, catalyzes the reversible cyclization of carbamoyl aspartate to dihydroorotate. In Deinococcus radiodurans (strain ATCC 13939 / DSM 20539 / JCM 16871 / CCUG 27074 / LMG 4051 / NBRC 15346 / NCIMB 9279 / VKM B-1422 / R1), this protein is Dihydroorotase.